The sequence spans 485 residues: Delta(14)-sterol reductase (485 aa).

5 helical membrane passes run Phe18–Phe38, Gly77–Leu97, Leu131–Ile151, Phe155–Val175, and Ser319–Phe339. NADP(+) contacts are provided by residues Lys346, Arg350, Leu373, Trp378, and Asn385–Tyr386. The helical transmembrane segment at Ala431–Ile451 threads the bilayer. NADP(+) contacts are provided by residues Asp457, Cys461–Tyr465, and Tyr472.

This sequence belongs to the ERG4/ERG24 family.

It localises to the membrane. The catalysed reaction is 4,4-dimethyl-5alpha-cholesta-8,24-dien-3beta-ol + NADP(+) = 4,4-dimethyl-5alpha-cholesta-8,14,24-trien-3beta-ol + NADPH + H(+). The protein operates within steroid biosynthesis; zymosterol biosynthesis; zymosterol from lanosterol: step 2/6. Its function is as follows. Reduces the C14=C15 double bond of 4,4-dimethyl-cholesta-8,14,24-trienol to produce 4,4-dimethyl-cholesta-8,24-dienol. This chain is Delta(14)-sterol reductase, found in Fusarium vanettenii (Neocosmospora pisi).